Consider the following 653-residue polypeptide: Serine/threonine-protein phosphatase with EF-hands 1 (653 aa).

The 30-residue stretch at 16-45 folds into the IQ domain; sequence SLRAALIIQNWYRGYKARLKARQHYALTIF. The catalytic stretch occupies residues 121–455; that stretch reads IDLLLEAFKE…PRFFQYQVTK (335 aa). 4 residues coordinate Mn(2+): Asp172, His174, Asp201, and Asn233. His234 serves as the catalytic Proton donor. Mn(2+)-binding residues include His285 and His403. EF-hand domains lie at 483–518, 566–601, and 606–641; these read SRKS…ILGL, RYRS…FSSH, and IDDS…VHRY. Asp579, Asp581, Ser583, Glu590, Asp619, Asn621, Asp623, Ser625, and Glu630 together coordinate Ca(2+).

Belongs to the PPP phosphatase family. Mn(2+) serves as cofactor. Requires Mg(2+) as cofactor. In terms of tissue distribution, detected in retina and retinal derived Y-79 retinoblastoma cells. Also found in fetal brain.

The enzyme catalyses O-phospho-L-seryl-[protein] + H2O = L-seryl-[protein] + phosphate. It carries out the reaction O-phospho-L-threonyl-[protein] + H2O = L-threonyl-[protein] + phosphate. Its activity is regulated as follows. Activated by calcium. May have a role in the recovery or adaptation response of photoreceptors. May have a role in development. The sequence is that of Serine/threonine-protein phosphatase with EF-hands 1 (PPEF1) from Homo sapiens (Human).